A 403-amino-acid chain; its full sequence is Tyrosine--tRNA ligase (403 aa).

The short motif at 42–51 is the 'HIGH' region element; that stretch reads PTAPDLHLGH. The short motif at 226–230 is the 'KMSKS' region element; it reads KMSKS. Lysine 229 lines the ATP pocket. An S4 RNA-binding domain is found at 339–400; it reads LRIASLLTAA…GKRNFARVAL (62 aa).

It belongs to the class-I aminoacyl-tRNA synthetase family. TyrS type 2 subfamily. As to quaternary structure, homodimer.

It is found in the cytoplasm. The enzyme catalyses tRNA(Tyr) + L-tyrosine + ATP = L-tyrosyl-tRNA(Tyr) + AMP + diphosphate + H(+). In terms of biological role, catalyzes the attachment of tyrosine to tRNA(Tyr) in a two-step reaction: tyrosine is first activated by ATP to form Tyr-AMP and then transferred to the acceptor end of tRNA(Tyr). This chain is Tyrosine--tRNA ligase, found in Xanthomonas campestris pv. campestris (strain ATCC 33913 / DSM 3586 / NCPPB 528 / LMG 568 / P 25).